The primary structure comprises 470 residues: ATP synthase subunit beta (470 aa).

156 to 163 (GGAGVGKT) is a binding site for ATP.

Belongs to the ATPase alpha/beta chains family. As to quaternary structure, F-type ATPases have 2 components, CF(1) - the catalytic core - and CF(0) - the membrane proton channel. CF(1) has five subunits: alpha(3), beta(3), gamma(1), delta(1), epsilon(1). CF(0) has three main subunits: a(1), b(2) and c(9-12). The alpha and beta chains form an alternating ring which encloses part of the gamma chain. CF(1) is attached to CF(0) by a central stalk formed by the gamma and epsilon chains, while a peripheral stalk is formed by the delta and b chains.

The protein resides in the cell inner membrane. It catalyses the reaction ATP + H2O + 4 H(+)(in) = ADP + phosphate + 5 H(+)(out). In terms of biological role, produces ATP from ADP in the presence of a proton gradient across the membrane. The catalytic sites are hosted primarily by the beta subunits. The polypeptide is ATP synthase subunit beta (Thermosipho africanus (strain TCF52B)).